The chain runs to 290 residues: Arylamine N-acetyltransferase 1 (290 aa).

The residue at position 1 (M1) is an N-acetylmethionine. The active-site Acyl-thioester intermediate is the C68. The CoA site is built by T103 and G104. Substrate is bound at residue 106 to 107 (IH). Active-site residues include H107 and D122. CoA contacts are provided by Y208 and S214.

Belongs to the arylamine N-acetyltransferase family.

The protein resides in the cytoplasm. The catalysed reaction is an arylamine + acetyl-CoA = an N-acetylarylamine + CoA. Its function is as follows. Participates in the detoxification of a plethora of hydrazine and arylamine drugs. Catalyzes the N- or O-acetylation of various arylamine and heterocyclic amine substrates and is able to bioactivate several known carcinogens. The sequence is that of Arylamine N-acetyltransferase 1 (NAT1) from Homo sapiens (Human).